The primary structure comprises 455 residues: UDP-glycosyltransferase 79B2 (455 aa).

UDP-alpha-D-glucose-binding positions include Ser-266, 325–327 (VQQ), 342–350 (HCGFGSMWE), and 364–367 (LGDQ).

The protein belongs to the UDP-glycosyltransferase family.

The chain is UDP-glycosyltransferase 79B2 (UGT79B2) from Arabidopsis thaliana (Mouse-ear cress).